Consider the following 265-residue polypeptide: uncharacterized protein (265 aa).

This is an uncharacterized protein from Saccharolobus islandicus (Sulfolobus islandicus).